Reading from the N-terminus, the 75-residue chain is MVSKSLIVLLLVSVLVSTFYTSEAYPASFDDDFDALDDLDDLDLDDLLDLEPADLVLLDMWANMLDSQDFEDDFE.

An N-terminal signal peptide occupies residues 1–24 (MVSKSLIVLLLVSVLVSTFYTSEA).

The protein belongs to the non-disulfide-bridged peptide (NDBP) superfamily. Expressed by the venom gland.

The protein localises to the secreted. This Tityus discrepans (Venezuelan scorpion) protein is Anionic peptide.